Reading from the N-terminus, the 386-residue chain is Interleukin-13 receptor subunit alpha-2 (386 aa).

An N-terminal signal peptide occupies residues 1–21; it reads MAFIHLDVGFLYTLLVCTAFG. At 22–338 the chain is on the extracellular side; it reads SMLSNAEIKV…CWKGDIWKET (317 aa). Fibronectin type-III domains lie at 33 to 133, 138 to 234, and 239 to 338; these read PPQD…SPQG, KIQD…LQNI, and PPDY…WKET. A disulfide bond links Cys64 and Cys112. Asn114 is a glycosylation site (N-linked (GlcNAc...) asparagine). Disulfide bonds link Cys144–Cys154 and Cys183–Cys196. 2 N-linked (GlcNAc...) asparagine glycosylation sites follow: Asn214 and Asn298. An intrachain disulfide couples Cys268 to Cys315. Positions 321–325 match the WSXWS motif motif; it reads WSEWS. The helical transmembrane segment at 339 to 359 threads the bilayer; that stretch reads LVFFLIPFAFVSIFVLVITCL. Topologically, residues 360–386 are cytoplasmic; sequence LLYKQRALLKTIFHTKKEVFSHQDTFC.

The protein belongs to the type I cytokine receptor family. Type 5 subfamily. As to quaternary structure, interacts with IL4RA. Interacts with high affinity to interleukin-13 (IL13), but not to interleukin-4 (IL4). Cleaved by MMP8 leading to a soluble form that is also able to interact with IL13. As to expression, expressed in kidney, placenta, liver, skeletal muscle and thymus. Expression was not seen in whole blood and heart.

The protein localises to the cell membrane. Its function is as follows. Cell surface receptor that plays a role in the regulation of IL-13-mediated responses. Functions as a decoy receptor that inhibits IL-13- and IL-4-mediated signal transduction via the JAK-STAT pathway and thereby modulates immune responses and inflammation. Serves as a functional signaling receptor for IL-13 in an alternative pathway involving AP-1 ultimately leading to the production of TGFB1. The protein is Interleukin-13 receptor subunit alpha-2 (IL13RA2) of Canis lupus familiaris (Dog).